The sequence spans 238 residues: Expansin-like protein 5 (238 aa).

A signal peptide spans 1–21 (MRINFKLILIILTSFYGIINC). An Expansin-like EG45 domain is found at 45–145 (NGNCGFGKLT…VKVPCRVSGN (101 aa)). Disulfide bonds link Cys48/Cys78 and Cys81/Cys140. A glycan (N-linked (GlcNAc...) asparagine) is linked at Asn89.

The protein belongs to the expansin family. Expansin A subfamily.

It is found in the secreted. May serve to lubricate the movement of the cellulose microfibrils during cell growth and wall extension and/or may serve to maintain the fluid state of the slug cell wall. The polypeptide is Expansin-like protein 5 (expl5) (Dictyostelium discoideum (Social amoeba)).